A 618-amino-acid chain; its full sequence is Methylmalonyl-CoA mutase small subunit (618 aa).

This sequence belongs to the methylmalonyl-CoA mutase family. As to quaternary structure, heterodimer of an alpha and a beta chain. Adenosylcob(III)alamin serves as cofactor.

It carries out the reaction (R)-methylmalonyl-CoA = succinyl-CoA. Its pathway is metabolic intermediate metabolism; propanoyl-CoA degradation; succinyl-CoA from propanoyl-CoA: step 3/3. Its function is as follows. Catalyzes the isomerization of succinyl-CoA to methylmalonyl-CoA during synthesis of propionate from tricarboxylic acid-cycle intermediates. In Porphyromonas gingivalis (strain ATCC BAA-308 / W83), this protein is Methylmalonyl-CoA mutase small subunit (mutA).